Consider the following 7756-residue polypeptide: Linear gramicidin synthase subunit C (7756 aa).

6 consecutive Carrier domains span residues 977–1052, 2042–2116, 3557–3632, 4621–4695, 6141–6216, and 7200–7274; these read EPRN…AALQ, APAT…ADSS, APRT…ASLL, APAT…TVTD, APRK…AGLL, and APET…GDSV. O-(pantetheine 4'-phosphoryl)serine occurs at positions 1012, 2077, 3592, 4656, 6176, and 7235.

The protein belongs to the ATP-dependent AMP-binding enzyme family. Large multienzyme complex composed of 4 subunits; LgrA, LgrB, LgrC and LgrD. Requires pantetheine 4'-phosphate as cofactor.

Its function is as follows. Activates the 7th to 12th amino acids (Val, D-Val, Trp, D-Leu, Xaa and D-Leu) in linear gramicidin and catalyzes the formation of the peptide bond between them. This enzyme is also responsible for the epimerization of the 8th (D-Val), the 10th (D-Leu) and 12th (D-Leu) amino acids. The 11th (Xaa) amino acid is Trp in linear gramicidin A; Phe in linear gramicidin B and Tyr in linear gramicidin C. The sequence is that of Linear gramicidin synthase subunit C (lgrC) from Brevibacillus parabrevis.